We begin with the raw amino-acid sequence, 114 residues long: Aspartate 1-decarboxylase (114 aa).

The active-site Schiff-base intermediate with substrate; via pyruvic acid is S25. S25 is modified (pyruvic acid (Ser)). T57 contacts substrate. Y58 (proton donor) is an active-site residue. G73–A75 lines the substrate pocket.

This sequence belongs to the PanD family. Heterooctamer of four alpha and four beta subunits. Pyruvate is required as a cofactor. In terms of processing, is synthesized initially as an inactive proenzyme, which is activated by self-cleavage at a specific serine bond to produce a beta-subunit with a hydroxyl group at its C-terminus and an alpha-subunit with a pyruvoyl group at its N-terminus.

The protein resides in the cytoplasm. The enzyme catalyses L-aspartate + H(+) = beta-alanine + CO2. Its pathway is cofactor biosynthesis; (R)-pantothenate biosynthesis; beta-alanine from L-aspartate: step 1/1. Catalyzes the pyruvoyl-dependent decarboxylation of aspartate to produce beta-alanine. The polypeptide is Aspartate 1-decarboxylase (Thermotoga petrophila (strain ATCC BAA-488 / DSM 13995 / JCM 10881 / RKU-1)).